Reading from the N-terminus, the 400-residue chain is tRNA(Ile)-lysidine synthase (400 aa).

25-30 (SGGVDS) lines the ATP pocket.

The protein belongs to the tRNA(Ile)-lysidine synthase family.

Its subcellular location is the cytoplasm. The enzyme catalyses cytidine(34) in tRNA(Ile2) + L-lysine + ATP = lysidine(34) in tRNA(Ile2) + AMP + diphosphate + H(+). In terms of biological role, ligates lysine onto the cytidine present at position 34 of the AUA codon-specific tRNA(Ile) that contains the anticodon CAU, in an ATP-dependent manner. Cytidine is converted to lysidine, thus changing the amino acid specificity of the tRNA from methionine to isoleucine. This chain is tRNA(Ile)-lysidine synthase, found in Francisella philomiragia subsp. philomiragia (strain ATCC 25017 / CCUG 19701 / FSC 153 / O#319-036).